The chain runs to 183 residues: Peptidyl-tRNA hydrolase (183 aa).

Position 15 (tyrosine 15) interacts with tRNA. The active-site Proton acceptor is the histidine 20. The tRNA site is built by tyrosine 67 and asparagine 69.

This sequence belongs to the PTH family. In terms of assembly, monomer.

It is found in the cytoplasm. It catalyses the reaction an N-acyl-L-alpha-aminoacyl-tRNA + H2O = an N-acyl-L-amino acid + a tRNA + H(+). Its function is as follows. Hydrolyzes ribosome-free peptidyl-tRNAs (with 1 or more amino acids incorporated), which drop off the ribosome during protein synthesis, or as a result of ribosome stalling. In terms of biological role, catalyzes the release of premature peptidyl moieties from peptidyl-tRNA molecules trapped in stalled 50S ribosomal subunits, and thus maintains levels of free tRNAs and 50S ribosomes. The protein is Peptidyl-tRNA hydrolase of Chlamydia abortus (strain DSM 27085 / S26/3) (Chlamydophila abortus).